The primary structure comprises 295 residues: Small ribosomal subunit protein uS2 (295 aa).

A disordered region spans residues 247–295 (TDKGLTSKNVSKLKQTKKFSKTKNIDEETNTEFEQALNDADENKNSDNA).

The protein belongs to the universal ribosomal protein uS2 family.

The protein is Small ribosomal subunit protein uS2 of Rickettsia conorii (strain ATCC VR-613 / Malish 7).